The primary structure comprises 874 residues: Cellulose synthase catalytic subunit [UDP-forming] (874 aa).

A run of 4 helical transmembrane segments spans residues 30 to 50 (SPFSAALGCLWTILAWIVFPL), 151 to 171 (ILGVIVTFSLILALICITQPF), 173 to 193 (PLSQFIFLLLLWGVALLVRRM), and 230 to 250 (LVCGLILLFAETYAWIVLVLG). The segment at 271–364 (QWPTVDIFVP…FVAIFDCDHV (94 aa)) is catalytic subdomain A. The active site involves Asp313. Substrate contacts are provided by Asp360 and Asp362. The tract at residues 441–501 (KPLDEIGGIA…GQRIRWARGM (61 aa)) is catalytic subdomain B. Asp457 is an active-site residue. Transmembrane regions (helical) follow at residues 525-545 (LNAMFHFLSGIPRLIFLTAPL), 547-567 (FLLLHAYIIYAPALMIALFVI), 592-612 (IYETVLAWYIAPPTLVALINP), 634-654 (VISRPYIFLVLLNLLGVAAGV), and 668-688 (VIVSLVWVFYNLVILGGAVAV). One can recognise a PilZ domain in the interval 694–790 (QVRRAHRVEI…QHIDFVQCTF (97 aa)). The helical transmembrane segment at 833–853 (SVKVIFRSLTALIAWIVSFIP) threads the bilayer.

Belongs to the glycosyltransferase 2 family. Mg(2+) is required as a cofactor.

It is found in the cell inner membrane. The enzyme catalyses [(1-&gt;4)-beta-D-glucosyl](n) + UDP-alpha-D-glucose = [(1-&gt;4)-beta-D-glucosyl](n+1) + UDP + H(+). Its pathway is glycan metabolism; bacterial cellulose biosynthesis. With respect to regulation, activated by bis-(3'-5') cyclic diguanylic acid (c-di-GMP). In terms of biological role, catalytic subunit of cellulose synthase. It polymerizes uridine 5'-diphosphate glucose to cellulose, which is produced as an extracellular component for mechanical and chemical protection at the onset of the stationary phase, when the cells exhibit multicellular behavior (rdar morphotype). Coexpression of cellulose and thin aggregative fimbriae leads to a hydrophobic network with tightly packed cells embedded in a highly inert matrix. The chain is Cellulose synthase catalytic subunit [UDP-forming] (bcsA) from Salmonella typhimurium (strain LT2 / SGSC1412 / ATCC 700720).